The primary structure comprises 285 residues: ATP synthase subunit a (285 aa).

The next 6 helical transmembrane spans lie at 41 to 61 (TWHV…LWIF), 102 to 122 (IAPL…MDLI), 164 to 184 (LGVF…GGFI), 197 to 217 (VFVQ…ALVS), 226 to 246 (LFGN…IGFM), and 252 to 272 (FVWA…FMML).

It belongs to the ATPase A chain family. In terms of assembly, F-type ATPases have 2 components, CF(1) - the catalytic core - and CF(0) - the membrane proton channel. CF(1) has five subunits: alpha(3), beta(3), gamma(1), delta(1), epsilon(1). CF(0) has three main subunits: a(1), b(2) and c(9-12). The alpha and beta chains form an alternating ring which encloses part of the gamma chain. CF(1) is attached to CF(0) by a central stalk formed by the gamma and epsilon chains, while a peripheral stalk is formed by the delta and b chains.

It is found in the cell inner membrane. In terms of biological role, key component of the proton channel; it plays a direct role in the translocation of protons across the membrane. This chain is ATP synthase subunit a, found in Pseudoalteromonas translucida (strain TAC 125).